The sequence spans 321 residues: Methionyl-tRNA formyltransferase (321 aa).

113-116 (SILP) lines the (6S)-5,6,7,8-tetrahydrofolate pocket.

Belongs to the Fmt family.

The catalysed reaction is L-methionyl-tRNA(fMet) + (6R)-10-formyltetrahydrofolate = N-formyl-L-methionyl-tRNA(fMet) + (6S)-5,6,7,8-tetrahydrofolate + H(+). Attaches a formyl group to the free amino group of methionyl-tRNA(fMet). The formyl group appears to play a dual role in the initiator identity of N-formylmethionyl-tRNA by promoting its recognition by IF2 and preventing the misappropriation of this tRNA by the elongation apparatus. This chain is Methionyl-tRNA formyltransferase, found in Vibrio atlanticus (strain LGP32) (Vibrio splendidus (strain Mel32)).